The following is a 207-amino-acid chain: Holliday junction branch migration complex subunit RuvA (207 aa).

A domain I region spans residues 1 to 64; it reads MISYIKGELA…EDECSLFGFL (64 aa). The segment at 65 to 143 is domain II; sequence TRDDLSMFKM…LDEVFESALS (79 aa). Positions 144–155 are flexible linker; the sequence is KNKKADNNSNVS. A domain III region spans residues 156–207; that stretch reads NVMMIRNDAVEALVSLGYSSKDALVAVKEVEDIENKDSETVLKEALKKLVKF.

This sequence belongs to the RuvA family. As to quaternary structure, homotetramer. Forms an RuvA(8)-RuvB(12)-Holliday junction (HJ) complex. HJ DNA is sandwiched between 2 RuvA tetramers; dsDNA enters through RuvA and exits via RuvB. An RuvB hexamer assembles on each DNA strand where it exits the tetramer. Each RuvB hexamer is contacted by two RuvA subunits (via domain III) on 2 adjacent RuvB subunits; this complex drives branch migration. In the full resolvosome a probable DNA-RuvA(4)-RuvB(12)-RuvC(2) complex forms which resolves the HJ.

The protein resides in the cytoplasm. The RuvA-RuvB-RuvC complex processes Holliday junction (HJ) DNA during genetic recombination and DNA repair, while the RuvA-RuvB complex plays an important role in the rescue of blocked DNA replication forks via replication fork reversal (RFR). RuvA specifically binds to HJ cruciform DNA, conferring on it an open structure. The RuvB hexamer acts as an ATP-dependent pump, pulling dsDNA into and through the RuvAB complex. HJ branch migration allows RuvC to scan DNA until it finds its consensus sequence, where it cleaves and resolves the cruciform DNA. This chain is Holliday junction branch migration complex subunit RuvA, found in Lachnospira eligens (strain ATCC 27750 / DSM 3376 / VPI C15-48 / C15-B4) (Eubacterium eligens).